The following is a 46-amino-acid chain: Protein PsbN (46 aa).

Residues 7–27 (ALSVAIGVLAVLLGMTGFGVY) traverse the membrane as a helical segment.

It belongs to the PsbN family.

The protein resides in the cellular thylakoid membrane. Its function is as follows. May play a role in photosystem I and II biogenesis. The sequence is that of Protein PsbN from Parasynechococcus marenigrum (strain WH8102).